The primary structure comprises 433 residues: MFTRLITTSALTGAIALTIGSQAFAQTELAWWHGMTGANNEMVNELSKEFNESQSEYKIVPVYKGNYPETLNAGIAAFRSKQPPAILQVFDAGSGVMMAAEGAIVPAAEVLEKGGYKFDKSQYLPGIVAYYSKPDGTMLSFPYNSSSPILYYNKDAFKKAGLDENKPPKTWPEVFEAAKKIKASGASPCGFTSTWLTWIQTENFAAWNNVPYGTNENGLAGTDVKLEINSPLYVEHFQAIADLAKDGTFRYGGRTSEAKQLFTSGECAMLTESSGGLGDVVKSGINYGIGQLPYYEGHGPQNTIPGGASLWVFAGLSDDQYKGIAEFFNFLSQTKIQVKLHEKSGYLPVTLAAYEETKKSDFYEKNPGRETPILQMMGKEPTENSKGVRLVNLPQVRDILNEEFEAMLGGKQDAKTALDNAVKRGNAAIAAAQ.

The N-terminal stretch at 1–25 (MFTRLITTSALTGAIALTIGSQAFA) is a signal peptide. Residues Y67, D91, S146, S273, G307, Y346, and R397 each coordinate sn-glycerol 3-phosphate.

Belongs to the bacterial solute-binding protein 1 family. As to quaternary structure, the complex is composed of two ATP-binding proteins (UgpC), two transmembrane proteins (UgpA and UgpE) and a solute-binding protein (UgpB).

The protein localises to the periplasm. Functionally, part of the ABC transporter complex UgpBAEC involved in sn-glycerol-3-phosphate (G3P) import. Binds G3P. The polypeptide is sn-glycerol-3-phosphate-binding periplasmic protein UgpB (ugpB) (Brucella suis biovar 1 (strain 1330)).